The primary structure comprises 301 residues: Cilia- and flagella-associated protein 161 (301 aa).

Residues 269 to 301 are disordered; that stretch reads GNPRDASSSMLDLPKPPTEDTRAMEQAMGLDTQ.

Microtubule inner protein component of sperm flagellar doublet microtubules. In terms of tissue distribution, expressed in airway epithelial cells.

Its subcellular location is the cytoplasm. It is found in the cytoskeleton. It localises to the cilium axoneme. The protein localises to the flagellum axoneme. Functionally, microtubule inner protein (MIP) part of the dynein-decorated doublet microtubules (DMTs) in cilia axoneme, which is required for motile cilia beating. The sequence is that of Cilia- and flagella-associated protein 161 from Homo sapiens (Human).